A 958-amino-acid polypeptide reads, in one-letter code: Nuclear factor NF-kappa-B p100 subunit (958 aa).

The RHD domain maps to 40-230 (LLMSYLSIIE…DPIHDSKSPG (191 aa)). Positions 343-347 (RKRRK) match the Nuclear localization signal motif. Disordered stretches follow at residues 350–374 (PTFNNHFYGGGSPMGGAPPGSSFGQ) and 411–442 (CSATNSSEKNQQPSISIKKEGEEASACSQTDS). Residues 352 to 390 (FNNHFYGGGSPMGGAPPGSSFGQGGGSNINYQYTGMNSA) form a GRR region. Positions 357-374 (YGGGSPMGGAPPGSSFGQ) are enriched in gly residues. Positions 412-425 (SATNSSEKNQQPSI) are enriched in polar residues. ANK repeat units lie at residues 500–529 (NGDTPLHLAVIHGQSSVIEQLVQIILSIPN), 539–568 (LQQTPLHLGVITKQYSVVAFLLKAGADPTI), 572–603 (YGNSVLHLAVQSEDDKMLGVLLKYPSVGQKNL), 610–639 (HGLSPVHWSVKMKNEKCLVLLVKAGANVNS), 644–674 (SGKSPLHIAVEMDNLNLAVFLVKKLHADINA), and 678–707 (GGNTPLHLAASRGSPMLTRMLVNEGANVLS). Positions 705–766 (VLSENDEPVN…SAEEMHRREQ (62 aa)) are disordered. A compositionally biased stretch (acidic residues) spans 724–734 (SESDSDVQMDT). The span at 753 to 766 (ECEHSAEEMHRREQ) shows a compositional bias: basic and acidic residues. One can recognise a Death domain in the interval 815-901 (VNVLALETNT…EGVELLCKSE (87 aa)). Over residues 904–916 (AKHHSPAESKNDS) the composition is skewed to basic and acidic residues. The segment at 904–958 (AKHHSPAESKNDSAYESQSMEVDQSSGNLMDDSQKQTIPVSAAELCPTTEPTIGQ) is disordered. Positions 917–931 (AYESQSMEVDQSSGN) are enriched in polar residues.

Active NF-kappa-B is a heterodimer of an about 52 kDa DNA-binding subunit and the weak DNA-binding subunit p65. Two heterodimers might form a labile tetramer. In terms of processing, while translation occurs, the particular unfolded structure after the GRR repeat promotes the generation of p52 making it an acceptable substrate for the proteasome. This process is known as cotranslational processing. The processed form is active and the unprocessed form acts as an inhibitor (I kappa B-like), being able to form cytosolic complexes with NF-kappa B, trapping it in the cytoplasm. Complete folding of the region downstream of the GRR repeat precludes processing. Constitutive processing is tightly suppressed by its C-terminal processing inhibitory domain, named PID, which contains the death domain. As to expression, expressed in spleen.

It is found in the nucleus. It localises to the cytoplasm. Functionally, appears to have dual functions such as cytoplasmic retention of attached NF-kappa-B proteins and generation of p52 by a cotranslational processing. The proteasome-mediated process ensures the production of both p52 and p100 and preserves their independent function. p52 binds to the kappa-B consensus sequence 5'-GGRNNYYCC-3', located in the enhancer region of genes involved in immune response and acute phase reactions. In concert with RELB, may play a role in the regulation of the circadian clock. This Xenopus laevis (African clawed frog) protein is Nuclear factor NF-kappa-B p100 subunit (nfkb2).